A 465-amino-acid polypeptide reads, in one-letter code: Kynureninase (465 aa).

Pyridoxal 5'-phosphate contacts are provided by residues Leu-116, Thr-117, 144–147, Asp-231, His-234, and Tyr-256; that span reads FPSD. At Lys-257 the chain carries N6-(pyridoxal phosphate)lysine. Pyridoxal 5'-phosphate is bound by residues Trp-291 and Asn-319.

This sequence belongs to the kynureninase family. In terms of assembly, homodimer. The cofactor is pyridoxal 5'-phosphate.

The protein localises to the cytoplasm. It catalyses the reaction L-kynurenine + H2O = anthranilate + L-alanine + H(+). It carries out the reaction 3-hydroxy-L-kynurenine + H2O = 3-hydroxyanthranilate + L-alanine + H(+). It functions in the pathway amino-acid degradation; L-kynurenine degradation; L-alanine and anthranilate from L-kynurenine: step 1/1. Its pathway is cofactor biosynthesis; NAD(+) biosynthesis; quinolinate from L-kynurenine: step 2/3. Functionally, catalyzes the cleavage of L-kynurenine (L-Kyn) and L-3-hydroxykynurenine (L-3OHKyn) into anthranilic acid (AA) and 3-hydroxyanthranilic acid (3-OHAA), respectively. The polypeptide is Kynureninase (Scheffersomyces stipitis (strain ATCC 58785 / CBS 6054 / NBRC 10063 / NRRL Y-11545) (Yeast)).